The sequence spans 283 residues: Bifunctional protein FolD (283 aa).

NADP(+) is bound by residues 165-167 (GRS), Ser190, and Thr231.

The protein belongs to the tetrahydrofolate dehydrogenase/cyclohydrolase family. In terms of assembly, homodimer.

It carries out the reaction (6R)-5,10-methylene-5,6,7,8-tetrahydrofolate + NADP(+) = (6R)-5,10-methenyltetrahydrofolate + NADPH. It catalyses the reaction (6R)-5,10-methenyltetrahydrofolate + H2O = (6R)-10-formyltetrahydrofolate + H(+). It participates in one-carbon metabolism; tetrahydrofolate interconversion. Catalyzes the oxidation of 5,10-methylenetetrahydrofolate to 5,10-methenyltetrahydrofolate and then the hydrolysis of 5,10-methenyltetrahydrofolate to 10-formyltetrahydrofolate. The protein is Bifunctional protein FolD of Nocardia farcinica (strain IFM 10152).